Consider the following 175-residue polypeptide: Protein MAL2 (175 aa).

Over 1–33 (MSAGGAVPPPPNPAVSFPAPRVTLPAGPDILRT) the chain is Cytoplasmic. The 145-residue stretch at 30 to 174 (ILRTYSGAFV…SLGLALRRWR (145 aa)) folds into the MARVEL domain. Residues 34 to 54 (YSGAFVCLEIVLGGLVWILVA) form a helical membrane-spanning segment. The Lumenal segment spans residues 55-65 (SSNVPLPLLQG). The helical transmembrane segment at 66–86 (WVMFVSVTAFFFSLLFLGLFL) threads the bilayer. At 87 to 101 (SGMVTQIDANWNFLD) the chain is on the cytoplasmic side. The chain crosses the membrane as a helical span at residues 102–122 (FVYHFIVFVFYFGAFLLEAAA). The Lumenal portion of the chain corresponds to 123-148 (TSLHDLQCNTTMTVKPLLNDNQYNIN). A glycan (N-linked (GlcNAc...) asparagine) is linked at Asn131. A helical membrane pass occupies residues 149-169 (VAATVFAFMTTACYGCSLGLA). At 170-175 (LRRWRP) the chain is on the cytoplasmic side.

This sequence belongs to the MAL family. Interacts with TPD52L2.

Its subcellular location is the cell membrane. It localises to the apical cell membrane. In terms of biological role, member of the machinery of polarized transport. Required for the indirect transcytotic route at the step of the egress of the transcytosing cargo from perinuclear endosomes in order for it to travel to the apical surface via a raft-dependent pathway. This Mus musculus (Mouse) protein is Protein MAL2 (Mal2).